Here is a 71-residue protein sequence, read N- to C-terminus: Transcription modulator YdgT (71 aa).

The protein belongs to the Hha/YmoA/Cnu family. In terms of assembly, forms complexes with both H-NS and StpA.

In terms of biological role, binds to H-NS and modified the range of genes it silences; H-NS alonge silences core gene while the H-NS-Hha complex (and presumably also H-NS-YdgT) silences genes acquired by horizontal gene transfer. Plays a role silencing virulence factors in the absence of factors that induce pathogenicity. The complex formed with H-NS binds to the specific 26-bp cnb site in the origin of replication oriC. The sequence is that of Transcription modulator YdgT (ydgT) from Salmonella choleraesuis (strain SC-B67).